Here is a 309-residue protein sequence, read N- to C-terminus: Methionyl-tRNA formyltransferase (309 aa).

Position 110–113 (Ser110–Pro113) interacts with (6S)-5,6,7,8-tetrahydrofolate. The interval Lys289–Lys309 is disordered. Positions Arg298–Lys309 are enriched in basic and acidic residues.

Belongs to the Fmt family.

The enzyme catalyses L-methionyl-tRNA(fMet) + (6R)-10-formyltetrahydrofolate = N-formyl-L-methionyl-tRNA(fMet) + (6S)-5,6,7,8-tetrahydrofolate + H(+). Functionally, attaches a formyl group to the free amino group of methionyl-tRNA(fMet). The formyl group appears to play a dual role in the initiator identity of N-formylmethionyl-tRNA by promoting its recognition by IF2 and preventing the misappropriation of this tRNA by the elongation apparatus. The sequence is that of Methionyl-tRNA formyltransferase from Saccharopolyspora erythraea (strain ATCC 11635 / DSM 40517 / JCM 4748 / NBRC 13426 / NCIMB 8594 / NRRL 2338).